The chain runs to 254 residues: Thiazole synthase (254 aa).

The active-site Schiff-base intermediate with DXP is the K95. 1-deoxy-D-xylulose 5-phosphate is bound by residues G156, 182 to 183 (AG), and 204 to 205 (NT).

Belongs to the ThiG family. In terms of assembly, homotetramer. Forms heterodimers with either ThiH or ThiS.

Its subcellular location is the cytoplasm. It catalyses the reaction [ThiS sulfur-carrier protein]-C-terminal-Gly-aminoethanethioate + 2-iminoacetate + 1-deoxy-D-xylulose 5-phosphate = [ThiS sulfur-carrier protein]-C-terminal Gly-Gly + 2-[(2R,5Z)-2-carboxy-4-methylthiazol-5(2H)-ylidene]ethyl phosphate + 2 H2O + H(+). It participates in cofactor biosynthesis; thiamine diphosphate biosynthesis. In terms of biological role, catalyzes the rearrangement of 1-deoxy-D-xylulose 5-phosphate (DXP) to produce the thiazole phosphate moiety of thiamine. Sulfur is provided by the thiocarboxylate moiety of the carrier protein ThiS. In vitro, sulfur can be provided by H(2)S. The chain is Thiazole synthase from Shewanella putrefaciens (strain CN-32 / ATCC BAA-453).